The following is a 284-amino-acid chain: 2-dehydro-3-deoxyphosphooctonate aldolase (284 aa).

This sequence belongs to the KdsA family.

The protein resides in the cytoplasm. It catalyses the reaction D-arabinose 5-phosphate + phosphoenolpyruvate + H2O = 3-deoxy-alpha-D-manno-2-octulosonate-8-phosphate + phosphate. It participates in carbohydrate biosynthesis; 3-deoxy-D-manno-octulosonate biosynthesis; 3-deoxy-D-manno-octulosonate from D-ribulose 5-phosphate: step 2/3. Its pathway is bacterial outer membrane biogenesis; lipopolysaccharide biosynthesis. The polypeptide is 2-dehydro-3-deoxyphosphooctonate aldolase (Pectobacterium carotovorum subsp. carotovorum (strain PC1)).